A 451-amino-acid chain; its full sequence is Putative gluconeogenesis factor (451 aa).

It belongs to the gluconeogenesis factor family.

It is found in the cytoplasm. Required for morphogenesis under gluconeogenic growth conditions. The sequence is that of Putative gluconeogenesis factor from Clostridium acetobutylicum (strain ATCC 824 / DSM 792 / JCM 1419 / IAM 19013 / LMG 5710 / NBRC 13948 / NRRL B-527 / VKM B-1787 / 2291 / W).